Here is a 156-residue protein sequence, read N- to C-terminus: MKLQLIAVGTKMPKWVEEGYKEYSRRFPKDMPLELIEIPAGKRGKNADIARILQKEGEAMLATVAKGNRIVTLDIPGKRWDTGQLAQQLDSWKLDGRDVSILIGGPEGLSPACKAAAEQSWSLSPLTLPHPLVRVVMAESLYRAWSVTANHPYHRE.

S-adenosyl-L-methionine contacts are provided by residues leucine 73, glycine 104, and 123-128; that span reads LSPLTL.

Belongs to the RNA methyltransferase RlmH family. In terms of assembly, homodimer.

The protein resides in the cytoplasm. The catalysed reaction is pseudouridine(1915) in 23S rRNA + S-adenosyl-L-methionine = N(3)-methylpseudouridine(1915) in 23S rRNA + S-adenosyl-L-homocysteine + H(+). Its function is as follows. Specifically methylates the pseudouridine at position 1915 (m3Psi1915) in 23S rRNA. The polypeptide is Ribosomal RNA large subunit methyltransferase H (Photobacterium profundum (strain SS9)).